Here is a 671-residue protein sequence, read N- to C-terminus: DNA ligase (671 aa).

NAD(+) is bound by residues 32–36, 81–82, and E113; these read DAEYD and SL. K115 serves as the catalytic N6-AMP-lysine intermediate. NAD(+)-binding residues include R136, E173, K290, and K314. The Zn(2+) site is built by C408, C411, C426, and C432. The BRCT domain maps to 593–671; it reads EIDSPFAGKT…ETEMLRLLGS (79 aa).

It belongs to the NAD-dependent DNA ligase family. LigA subfamily. Requires Mg(2+) as cofactor. Mn(2+) serves as cofactor.

It carries out the reaction NAD(+) + (deoxyribonucleotide)n-3'-hydroxyl + 5'-phospho-(deoxyribonucleotide)m = (deoxyribonucleotide)n+m + AMP + beta-nicotinamide D-nucleotide.. Its function is as follows. DNA ligase that catalyzes the formation of phosphodiester linkages between 5'-phosphoryl and 3'-hydroxyl groups in double-stranded DNA using NAD as a coenzyme and as the energy source for the reaction. It is essential for DNA replication and repair of damaged DNA. The polypeptide is DNA ligase (Escherichia fergusonii (strain ATCC 35469 / DSM 13698 / CCUG 18766 / IAM 14443 / JCM 21226 / LMG 7866 / NBRC 102419 / NCTC 12128 / CDC 0568-73)).